The chain runs to 633 residues: Probable potassium transport system protein Kup 2 (633 aa).

The next 11 helical transmembrane spans lie at 59 to 79 (ISAI…ILIM), 110 to 130 (ILLV…LTPA), 145 to 165 (TALQ…LFLF), 173 to 193 (IGAL…AAGI), 219 to 239 (GFAS…AEAL), 256 to 276 (FGLV…LIIV), 287 to 307 (LLYP…ATVI), 345 to 365 (IYIP…VLGF), 374 to 394 (AYGV…FFVI), 402 to 422 (LLLS…FVSS), and 429 to 449 (EGGW…LTWV).

It belongs to the HAK/KUP transporter (TC 2.A.72) family.

The protein localises to the cell inner membrane. The catalysed reaction is K(+)(in) + H(+)(in) = K(+)(out) + H(+)(out). Functionally, transport of potassium into the cell. Likely operates as a K(+):H(+) symporter. In Cupriavidus necator (strain ATCC 17699 / DSM 428 / KCTC 22496 / NCIMB 10442 / H16 / Stanier 337) (Ralstonia eutropha), this protein is Probable potassium transport system protein Kup 2.